An 827-amino-acid polypeptide reads, in one-letter code: Transcription factor SOX-6 (827 aa).

A compositionally biased stretch (polar residues) spans 1 to 10; it reads MSSKQATSPF. The tract at residues 1 to 51 is disordered; that stretch reads MSSKQATSPFACTVDGEETMTQDLTSREKEEGSDQHPASHLPLHPIMHNKP. Over residues 25-34 the composition is skewed to basic and acidic residues; the sequence is TSREKEEGSD. Thr-119 is subject to Phosphothreonine. The stretch at 184 to 257 forms a coiled coil; it reads LAEKERQLST…QHKINLLQQQ (74 aa). 2 disordered regions span residues 329–360 and 380–470; these read HVSH…GGHS and SPGA…PIGG. Residues 341–357 show a composition bias toward basic and acidic residues; it reads GISDRLGRNLDPYEHGG. Ser-399 is modified (phosphoserine). Thr-401 carries the post-translational modification Phosphothreonine. Glycyl lysine isopeptide (Lys-Gly) (interchain with G-Cter in SUMO) cross-links involve residues Lys-404 and Lys-417. Polar residues-rich tracts occupy residues 421 to 431 and 439 to 461; these read TAQPLNLSSRP and SPTS…LPNK. A phosphoserine mark is found at Ser-439 and Ser-442. The HMG box DNA-binding region spans 620–688; it reads IKRPMNAFMV…IHLEKYPNYK (69 aa). Disordered regions lie at residues 752 to 772 and 786 to 827; these read TPSP…EPSL and ASLA…VSAN. Positions 795–808 are enriched in acidic residues; sequence NGEDEMEAYDDYED.

Homodimer. Interacts with DAZAP2. May interact with CENPK. In terms of processing, sumoylation inhibits the transcriptional activity.

It is found in the nucleus. It localises to the cytoplasm. Its function is as follows. Transcription factor that plays a key role in several developmental processes, including neurogenesis, chondrocytes differentiation and cartilage formation. Specifically binds the 5'-AACAAT-3' DNA motif present in enhancers and super-enhancers and promotes expression of genes important for chondrogenesis. Required for overt chondrogenesis when condensed prechondrocytes differentiate into early stage chondrocytes: SOX5 and SOX6 cooperatively bind with SOX9 on active enhancers and super-enhancers associated with cartilage-specific genes, and thereby potentiate SOX9's ability to transactivate. Not involved in precartilaginous condensation, the first step in chondrogenesis, during which skeletal progenitors differentiate into prechondrocytes. Together with SOX5, required to form and maintain a pool of highly proliferating chondroblasts between epiphyses and metaphyses, to form columnar chondroblasts, delay chondrocyte prehypertrophy but promote hypertrophy, and to delay terminal differentiation of chondrocytes on contact with ossification fronts. Binds to the proximal promoter region of the myelin protein MPZ gene, and is thereby involved in the differentiation of oligodendroglia in the developing spinal tube. Binds to the gene promoter of MBP and acts as a transcriptional repressor. This Rattus norvegicus (Rat) protein is Transcription factor SOX-6.